Here is a 421-residue protein sequence, read N- to C-terminus: Putative aspartate aminotransferase, cytoplasmic 2 (421 aa).

N6-(pyridoxal phosphate)lysine is present on K249.

Belongs to the class-I pyridoxal-phosphate-dependent aminotransferase family. As to quaternary structure, homodimer. Requires pyridoxal 5'-phosphate as cofactor.

It is found in the cytoplasm. It catalyses the reaction L-aspartate + 2-oxoglutarate = oxaloacetate + L-glutamate. This Homo sapiens (Human) protein is Putative aspartate aminotransferase, cytoplasmic 2 (GOT1L1).